The following is a 422-amino-acid chain: ORC1-type DNA replication protein 13 (422 aa).

ATP-binding positions include 80 to 84, tyrosine 231, and arginine 243; that span reads TGKTL.

Belongs to the CDC6/cdc18 family.

Its function is as follows. Involved in regulation of DNA replication. The sequence is that of ORC1-type DNA replication protein 13 (cdc6m) from Haloarcula marismortui (strain ATCC 43049 / DSM 3752 / JCM 8966 / VKM B-1809) (Halobacterium marismortui).